Consider the following 338-residue polypeptide: MNFTGAHILSIQQFQREDINRIFDVADAMEPYALRRRVTRVLEGAILGNMFFEPSTRTRVSFGAAFNLLGGNVRETTGFESSSLTKGESLFDTARVLSGYSDVICMRHPAAGSVAEFAEGSRVPVINGGDGPNEHPTQALLDLYTIRKELRSKGRGIDDLRIAMIGDLKHGRTVHSLCKLLGLFNNVSITLVSPKELAMPDYIVEDLRQAGHKVTITDDLPTSITHIDIAYSTRIQEERFASKEEADSYRGRFRLNQAIYTQFCEPNTVIMHPLPRDSRAEANELDNDLNTNPNLAIFRQADNGVLVRMALFALVLDVADQVDKYAREVRWFSSLRAN.

Carbamoyl phosphate-binding residues include Arg-57 and Thr-58. Lys-86 is an L-aspartate binding site. 3 residues coordinate carbamoyl phosphate: Arg-107, His-135, and Gln-138. Residues Arg-172 and Arg-234 each contribute to the L-aspartate site. Residues Leu-274 and Pro-275 each contribute to the carbamoyl phosphate site.

It belongs to the aspartate/ornithine carbamoyltransferase superfamily. ATCase family. Heterododecamer (2C3:3R2) of six catalytic PyrB chains organized as two trimers (C3), and six regulatory PyrI chains organized as three dimers (R2).

It catalyses the reaction carbamoyl phosphate + L-aspartate = N-carbamoyl-L-aspartate + phosphate + H(+). Its pathway is pyrimidine metabolism; UMP biosynthesis via de novo pathway; (S)-dihydroorotate from bicarbonate: step 2/3. Functionally, catalyzes the condensation of carbamoyl phosphate and aspartate to form carbamoyl aspartate and inorganic phosphate, the committed step in the de novo pyrimidine nucleotide biosynthesis pathway. This Cellvibrio japonicus (strain Ueda107) (Pseudomonas fluorescens subsp. cellulosa) protein is Aspartate carbamoyltransferase catalytic subunit.